Reading from the N-terminus, the 458-residue chain is Type III intermediate filament (458 aa).

Residues 1-100 (MEKGYKMNRS…KVNRTNEKAE (100 aa)) are head. Residues 97 to 405 (EKAEMIELND…KLLEGEENRI (309 aa)) enclose the IF rod domain. The tail stretch occupies residues 406–458 (SMPLPSFGSMSLSDAMFEQQPFENRTSKKKIVIKTVETSGGDVISETTQKIED).

This sequence belongs to the intermediate filament family.

This chain is Type III intermediate filament, found in Tetronarce californica (Pacific electric ray).